We begin with the raw amino-acid sequence, 521 residues long: Circadian clock oscillator protein KaiC (521 aa).

KaiC domains lie at 1 to 248 (MNEP…INIF) and 262 to 521 (ARIS…LDEE). Residues Gly-50, Thr-51, Gly-52, Lys-53, Thr-54, Leu-55, Ser-90, Lys-225, Leu-226, Arg-227, Thr-229, His-231, Thr-241, Thr-291, Gly-292, Thr-293, Gly-294, Lys-295, Thr-296, and Leu-297 each coordinate ATP. Thr-54 contributes to the Mg(2+) binding site. A Mg(2+)-binding site is contributed by Thr-296. Glu-319 is a binding site for Mg(2+). Residue Trp-332 participates in ATP binding. Position 432 is a phosphoserine; by autocatalysis (Ser-432). Thr-433 is subject to Phosphothreonine; by autocatalysis. ATP is bound by residues Arg-452, Lys-458, Met-459, Arg-460, Ser-462, His-464, and Lys-466.

The protein belongs to the KaiC family. Homohexamer; hexamerization is dependent on ATP-binding. The KaiABC complex composition changes during the circadian cycle to control KaiC phosphorylation. Complexes KaiC(6), KaiA(2-4):KaiC(6), KaiB(6):KaiC(6) and KaiC(6):KaiB(6):KaiA(12) are among the most important forms, many form cooperatively. KaiC interacts with SasA, activating its autokinase function and leading to RpaA activation. Requires Mg(2+) as cofactor. In terms of processing, phosphorylated on serine and threonine residues by autocatalysis. Has a 4 step phosphorylation cycle; the autokinase acts first on Thr-433, then Ser-432. When Ser-432 is modified KaiC switches to an autophosphatase mode, acting first on phospho-Thr-433 then phospho-Ser-432.

It carries out the reaction L-seryl-[protein] + ATP = O-phospho-L-seryl-[protein] + ADP + H(+). The enzyme catalyses L-threonyl-[protein] + ATP = O-phospho-L-threonyl-[protein] + ADP + H(+). The catalysed reaction is ATP + H2O = ADP + phosphate + H(+). The interaction with KaiA enhances its phosphorylation status, while the interaction with KaiB decreases it. Functionally, central component of the KaiABC oscillator complex, which constitutes the main circadian regulator in cyanobacteria. Complex composition changes during the circadian cycle to control KaiC phosphorylation. KaiA stimulates KaiC autophosphorylation, while KaiB sequesters KaiA, leading to KaiC autodephosphorylation. Clock output pathways impact the RpaA transcriptional regulator. KaiC enhances the autophosphorylation activity of SasA, which then transfers its phosphate group to RpaA to activate it. KaiB and KaiC together enhance the phospho-RpaA dephosphatase activity of CikA. Has a weak, temperature-independent ATPase activity; ATPase activity defines the circadian period. The phosphorylation state of KaiC modulates its ATPase activity and effects KaiB binding. The polypeptide is Circadian clock oscillator protein KaiC (Rippkaea orientalis (strain PCC 8801 / RF-1) (Cyanothece sp. (strain PCC 8801))).